A 185-amino-acid polypeptide reads, in one-letter code: Small ribosomal subunit protein uS7 (185 aa).

The protein belongs to the universal ribosomal protein uS7 family. Part of the 30S ribosomal subunit.

In terms of biological role, one of the primary rRNA binding proteins, it binds directly to 16S rRNA where it nucleates assembly of the head domain of the 30S subunit. Is located at the subunit interface close to the decoding center. In Methanothrix thermoacetophila (strain DSM 6194 / JCM 14653 / NBRC 101360 / PT) (Methanosaeta thermophila), this protein is Small ribosomal subunit protein uS7.